The primary structure comprises 185 residues: Anaphase-promoting complex subunit 10 (185 aa).

At threonine 2 the chain carries N-acetylthreonine. A DOC domain is found at 2–185 (TTPNKTPPGA…IDFMMYRSIR (184 aa)). At lysine 169 the chain carries N6-acetyllysine.

Belongs to the APC10 family. The mammalian APC/C is composed at least of 14 distinct subunits ANAPC1, ANAPC2, CDC27/APC3, ANAPC4, ANAPC5, CDC16/APC6, ANAPC7, CDC23/APC8, ANAPC10, ANAPC11, CDC26/APC12, ANAPC13, ANAPC15 and ANAPC16 that assemble into a complex of at least 19 chains with a combined molecular mass of around 1.2 MDa; APC/C interacts with FZR1 and FBXO5. The C-terminus of APC10 binds to CDC27/APC3. Interacts with PIWIL1; interaction only takes place when PIWIL1 binds piRNA. Interacts with FBXO43; the interaction is direct.

Its pathway is protein modification; protein ubiquitination. Component of the anaphase promoting complex/cyclosome (APC/C), a cell cycle-regulated E3 ubiquitin ligase that controls progression through mitosis and the G1 phase of the cell cycle. The APC/C complex acts by mediating ubiquitination and subsequent degradation of target proteins: it mainly mediates the formation of 'Lys-11'-linked polyubiquitin chains and, to a lower extent, the formation of 'Lys-48'- and 'Lys-63'-linked polyubiquitin chains. The APC/C complex catalyzes assembly of branched 'Lys-11'-/'Lys-48'-linked branched ubiquitin chains on target proteins. The protein is Anaphase-promoting complex subunit 10 (ANAPC10) of Homo sapiens (Human).